We begin with the raw amino-acid sequence, 70 residues long: Alpha-toxin Bot9 (70 aa).

The LCN-type CS-alpha/beta domain maps to 6 to 69; it reads RDGYIVYPNN…PIKDPSYKCY (64 aa). Intrachain disulfides connect cysteine 16/cysteine 68, cysteine 20/cysteine 40, cysteine 26/cysteine 50, and cysteine 30/cysteine 52.

This sequence belongs to the long (4 C-C) scorpion toxin superfamily. Sodium channel inhibitor family. Alpha subfamily. In terms of tissue distribution, expressed by the venom gland.

Its subcellular location is the secreted. Its function is as follows. Alpha toxins bind voltage-independently at site-3 of sodium channels (Nav) and inhibit the inactivation of the activated channels, thereby blocking neuronal transmission. This toxin is active against rat Nav1.2/SCN2A and B.germanica Nav1. This is Alpha-toxin Bot9 from Buthus occitanus tunetanus (Common European scorpion).